The primary structure comprises 229 residues: Ribonuclease 3 (229 aa).

The 132-residue stretch at 5 to 136 (LAELERALGI…VIGAIYLDQG (132 aa)) folds into the RNase III domain. Residue glutamate 49 coordinates Mg(2+). Residue aspartate 53 is part of the active site. Mg(2+)-binding residues include aspartate 122 and glutamate 125. Glutamate 125 is an active-site residue. A DRBM domain is found at 161–229 (DPTTRLQEIV…AQAALADIDR (69 aa)).

Belongs to the ribonuclease III family. In terms of assembly, homodimer. Mg(2+) is required as a cofactor.

The protein localises to the cytoplasm. The enzyme catalyses Endonucleolytic cleavage to 5'-phosphomonoester.. Functionally, digests double-stranded RNA. Involved in the processing of primary rRNA transcript to yield the immediate precursors to the large and small rRNAs (23S and 16S). Processes some mRNAs, and tRNAs when they are encoded in the rRNA operon. Processes pre-crRNA and tracrRNA of type II CRISPR loci if present in the organism. The polypeptide is Ribonuclease 3 (Chloroflexus aggregans (strain MD-66 / DSM 9485)).